Consider the following 234-residue polypeptide: Ubiquinone biosynthesis O-methyltransferase (234 aa).

R40, G59, D80, and M123 together coordinate S-adenosyl-L-methionine.

The protein belongs to the methyltransferase superfamily. UbiG/COQ3 family.

It catalyses the reaction a 3-demethylubiquinol + S-adenosyl-L-methionine = a ubiquinol + S-adenosyl-L-homocysteine + H(+). It carries out the reaction a 3-(all-trans-polyprenyl)benzene-1,2-diol + S-adenosyl-L-methionine = a 2-methoxy-6-(all-trans-polyprenyl)phenol + S-adenosyl-L-homocysteine + H(+). Its pathway is cofactor biosynthesis; ubiquinone biosynthesis. In terms of biological role, O-methyltransferase that catalyzes the 2 O-methylation steps in the ubiquinone biosynthetic pathway. The protein is Ubiquinone biosynthesis O-methyltransferase of Coxiella burnetii (strain CbuK_Q154) (Coxiella burnetii (strain Q154)).